The chain runs to 258 residues: Ciliogenesis and planar polarity effector 2 (258 aa).

The small GTPase-like stretch occupies residues 50-258; sequence SIDTASYKIF…LPNPPESAPE (209 aa). Positions 64, 65, 67, 68, 69, 70, 82, 84, 87, 176, 178, and 206 each coordinate GTP.

Belongs to the small GTPase superfamily. Rab family. In terms of assembly, interacts with FUZ. Associates with the CPLANE (ciliogenesis and planar polarity effectors) complex via its interaction with FUZ.

The protein localises to the cytoplasm. It is found in the cytoskeleton. Its subcellular location is the cilium basal body. It localises to the microtubule organizing center. The protein resides in the centrosome. The protein localises to the centriole. Functionally, required for efficient primary cilia initiation, regulating a late step in cilia initiation. Plays a role in the final maturation of the mother centriole and ciliary vesicle that allows extension of the ciliary axoneme. This Homo sapiens (Human) protein is Ciliogenesis and planar polarity effector 2.